A 208-amino-acid polypeptide reads, in one-letter code: UPF0637 protein BCB4264_A4063 (208 aa).

The protein belongs to the UPF0637 family.

The chain is UPF0637 protein BCB4264_A4063 from Bacillus cereus (strain B4264).